Reading from the N-terminus, the 137-residue chain is uncharacterized protein (137 aa).

A helical membrane pass occupies residues 116-136 (YLSIANLATLLLFGIIGLSII).

It localises to the host membrane. This is an uncharacterized protein from His1 virus (isolate Australia/Victoria) (His1V).